The sequence spans 255 residues: Ribosomal RNA small subunit methyltransferase A (255 aa).

Residues N12, L14, G39, E60, D84, and N102 each coordinate S-adenosyl-L-methionine.

Belongs to the class I-like SAM-binding methyltransferase superfamily. rRNA adenine N(6)-methyltransferase family. RsmA subfamily.

The protein localises to the cytoplasm. It catalyses the reaction adenosine(1518)/adenosine(1519) in 16S rRNA + 4 S-adenosyl-L-methionine = N(6)-dimethyladenosine(1518)/N(6)-dimethyladenosine(1519) in 16S rRNA + 4 S-adenosyl-L-homocysteine + 4 H(+). In terms of biological role, specifically dimethylates two adjacent adenosines (A1518 and A1519) in the loop of a conserved hairpin near the 3'-end of 16S rRNA in the 30S particle. May play a critical role in biogenesis of 30S subunits. In Methylobacillus flagellatus (strain ATCC 51484 / DSM 6875 / VKM B-1610 / KT), this protein is Ribosomal RNA small subunit methyltransferase A.